A 603-amino-acid chain; its full sequence is Elongation factor 4 (603 aa).

Positions 7 to 189 constitute a tr-type G domain; the sequence is SRIRNFSIIA…SIVHLVPPPE (183 aa). GTP contacts are provided by residues 19-24 and 136-139; these read DHGKST and NKID.

Belongs to the TRAFAC class translation factor GTPase superfamily. Classic translation factor GTPase family. LepA subfamily.

It localises to the cell inner membrane. The catalysed reaction is GTP + H2O = GDP + phosphate + H(+). Functionally, required for accurate and efficient protein synthesis under certain stress conditions. May act as a fidelity factor of the translation reaction, by catalyzing a one-codon backward translocation of tRNAs on improperly translocated ribosomes. Back-translocation proceeds from a post-translocation (POST) complex to a pre-translocation (PRE) complex, thus giving elongation factor G a second chance to translocate the tRNAs correctly. Binds to ribosomes in a GTP-dependent manner. This chain is Elongation factor 4, found in Acaryochloris marina (strain MBIC 11017).